A 500-amino-acid chain; its full sequence is Trehalose-6-phosphate synthase (500 aa).

Arginine 28 contacts D-glucose 6-phosphate. 48–49 (GG) provides a ligand contact to UDP-alpha-D-glucose. D-glucose 6-phosphate is bound by residues tyrosine 104 and aspartate 158. Residues arginine 300 and lysine 305 each coordinate UDP-alpha-D-glucose. Arginine 338 contributes to the D-glucose 6-phosphate binding site. 403-407 (LVAKE) serves as a coordination point for UDP-alpha-D-glucose.

This sequence belongs to the glycosyltransferase 20 family. As to quaternary structure, homotetramer.

The enzyme catalyses ADP-alpha-D-glucose + D-glucose 6-phosphate = alpha,alpha-trehalose 6-phosphate + ADP + H(+). It carries out the reaction CDP-alpha-D-glucose + D-glucose 6-phosphate = alpha,alpha-trehalose 6-phosphate + CDP + H(+). It catalyses the reaction GDP-alpha-D-glucose + D-glucose 6-phosphate = alpha,alpha-trehalose 6-phosphate + GDP + H(+). The catalysed reaction is TDP-alpha-D-glucose + D-glucose 6-phosphate = 5-methyl-UDP + alpha,alpha-trehalose 6-phosphate + H(+). The enzyme catalyses D-glucose 6-phosphate + UDP-alpha-D-glucose = alpha,alpha-trehalose 6-phosphate + UDP + H(+). It functions in the pathway glycan biosynthesis; trehalose biosynthesis. Functionally, probably involved in the osmoprotection via the biosynthesis of trehalose and in the production of glycogen and alpha-glucan via the TreS-Pep2 branch involved in the biosynthesis of maltose-1-phosphate (M1P). Catalyzes the transfer of glucose from UDP-glucose (UDP-Glc) to D-glucose 6-phosphate (Glc-6-P) to form trehalose-6-phosphate. Probably also able to use ADP-Glc, CDP-Glc, GDP-Glc and TDP-Glc as glucosyl donors. The protein is Trehalose-6-phosphate synthase of Mycobacterium marinum (strain ATCC BAA-535 / M).